A 308-amino-acid chain; its full sequence is Porphobilinogen deaminase (308 aa).

Residue C241 is modified to S-(dipyrrolylmethanemethyl)cysteine.

Belongs to the HMBS family. Monomer. Dipyrromethane is required as a cofactor.

It carries out the reaction 4 porphobilinogen + H2O = hydroxymethylbilane + 4 NH4(+). It functions in the pathway porphyrin-containing compound metabolism; protoporphyrin-IX biosynthesis; coproporphyrinogen-III from 5-aminolevulinate: step 2/4. Tetrapolymerization of the monopyrrole PBG into the hydroxymethylbilane pre-uroporphyrinogen in several discrete steps. In Staphylococcus epidermidis (strain ATCC 35984 / DSM 28319 / BCRC 17069 / CCUG 31568 / BM 3577 / RP62A), this protein is Porphobilinogen deaminase.